The following is a 133-amino-acid chain: Large ribosomal subunit protein bL21 (133 aa).

The tract at residues 1 to 22 (MAEKPAAKPKAAAAKAEAKDQS) is disordered.

This sequence belongs to the bacterial ribosomal protein bL21 family. As to quaternary structure, part of the 50S ribosomal subunit. Contacts protein L20.

Functionally, this protein binds to 23S rRNA in the presence of protein L20. This is Large ribosomal subunit protein bL21 from Prochlorococcus marinus (strain MIT 9303).